A 244-amino-acid chain; its full sequence is Protein-L-isoaspartate O-methyltransferase 2 (244 aa).

Ser-88 is an active-site residue.

The protein belongs to the methyltransferase superfamily. L-isoaspartyl/D-aspartyl protein methyltransferase family.

The protein localises to the cytoplasm. It carries out the reaction [protein]-L-isoaspartate + S-adenosyl-L-methionine = [protein]-L-isoaspartate alpha-methyl ester + S-adenosyl-L-homocysteine. Catalyzes the methyl esterification of L-isoaspartyl residues in peptides and proteins that result from spontaneous decomposition of normal L-aspartyl and L-asparaginyl residues. It plays a role in the repair and/or degradation of damaged proteins. The chain is Protein-L-isoaspartate O-methyltransferase 2 from Shewanella sediminis (strain HAW-EB3).